The primary structure comprises 276 residues: Pantothenate synthetase (276 aa).

27 to 34 (MGALHKGH) lines the ATP pocket. His-34 acts as the Proton donor in catalysis. Gln-58 serves as a coordination point for (R)-pantoate. Residue Gln-58 coordinates beta-alanine. 147–150 (GKKD) contributes to the ATP binding site. Gln-153 contacts (R)-pantoate. Residues Val-176 and 184–187 (LSSR) each bind ATP.

Belongs to the pantothenate synthetase family. Homodimer.

The protein localises to the cytoplasm. The catalysed reaction is (R)-pantoate + beta-alanine + ATP = (R)-pantothenate + AMP + diphosphate + H(+). It participates in cofactor biosynthesis; (R)-pantothenate biosynthesis; (R)-pantothenate from (R)-pantoate and beta-alanine: step 1/1. Functionally, catalyzes the condensation of pantoate with beta-alanine in an ATP-dependent reaction via a pantoyl-adenylate intermediate. The polypeptide is Pantothenate synthetase (Helicobacter acinonychis (strain Sheeba)).